A 286-amino-acid polypeptide reads, in one-letter code: Glycine--tRNA ligase alpha subunit (286 aa).

The protein belongs to the class-II aminoacyl-tRNA synthetase family. As to quaternary structure, tetramer of two alpha and two beta subunits.

The protein resides in the cytoplasm. It catalyses the reaction tRNA(Gly) + glycine + ATP = glycyl-tRNA(Gly) + AMP + diphosphate. The protein is Glycine--tRNA ligase alpha subunit (glyQ) of Thermotoga maritima (strain ATCC 43589 / DSM 3109 / JCM 10099 / NBRC 100826 / MSB8).